A 292-amino-acid polypeptide reads, in one-letter code: Calponin-1 (292 aa).

The 104-residue stretch at 28–131 (PQTERQLRVW…STLIALASQA (104 aa)) folds into the Calponin-homology (CH) domain. Calponin-like repeat units follow at residues 164–189 (IGLQ…RHLY), 204–229 (ISLQ…RQIF), and 243–268 (IGLQ…RQVY). A Phosphothreonine; by ROCK2 modification is found at Thr170. Residue Ser175 is modified to Phosphoserine; by PKC, CaMK2 and ROCK2. Phosphothreonine; by ROCK2 is present on residues Thr180 and Thr184. Thr184 is modified (phosphothreonine; by PKC and CaMK2). The tract at residues 185-193 (RRHLYDPKL) is calmodulin-binding. Thr259 carries the phosphothreonine; by ROCK2 modification.

This sequence belongs to the calponin family. Post-translationally, phosphorylation by PKC or CaM kinase II reduces the binding of calponin to F-actin and tropomyosin. In terms of tissue distribution, smooth muscle, and tissues containing significant amounts of smooth muscle.

In terms of biological role, thin filament-associated protein that is implicated in the regulation and modulation of smooth muscle contraction. It is capable of binding to actin, calmodulin and tropomyosin. The interaction of calponin with actin inhibits the actomyosin Mg-ATPase activity. This is Calponin-1 (CNN1) from Gallus gallus (Chicken).